Consider the following 486-residue polypeptide: HTH-type transcriptional regulator PrpR (486 aa).

One can recognise an HTH cro/C1-type domain in the interval leucine 22–phenylalanine 76. Residues glutamine 33–asparagine 52 constitute a DNA-binding region (H-T-H motif).

Belongs to the short-chain fatty acyl-CoA assimilation regulator (ScfR) family.

Its pathway is organic acid metabolism; propanoate degradation. It functions in the pathway steroid metabolism; cholesterol metabolism. Plays a key role in regulating expression of enzymes involved in the catabolism of short chain fatty acids (SCFA) via both the glyoxylate (acetyl degradation route) and the methylcitrate cycle (propionate degradation route). Required for intracellular growth in macrophages and for the assimilation of cholesterol-derived propionate. PrpR acts as a transcriptional activator of prpDC and icl genes when propionate is the main carbon source, and as a ramB repressor. During growth on propionate, PrpR also acts as a transcriptional repressor of dnaA, which encodes the DnaA initiator protein responsible for initiating chromosomal replication. It is possibly involved in the regulation of genes responsible for controlling cholesterol utilization. The chain is HTH-type transcriptional regulator PrpR from Mycobacterium tuberculosis (strain ATCC 25618 / H37Rv).